A 110-amino-acid chain; its full sequence is Insulin (110 aa).

The first 24 residues, methionine 1–alanine 24, serve as a signal peptide directing secretion. 3 disulfide bridges follow: cysteine 31–cysteine 96, cysteine 43–cysteine 109, and cysteine 95–cysteine 100. Residues glycine 57–glutamine 87 constitute a propeptide, c peptide.

The protein belongs to the insulin family. In terms of assembly, heterodimer of a B chain and an A chain linked by two disulfide bonds.

The protein resides in the secreted. In terms of biological role, insulin decreases blood glucose concentration. It increases cell permeability to monosaccharides, amino acids and fatty acids. It accelerates glycolysis, the pentose phosphate cycle, and glycogen synthesis in liver. This is Insulin (INS) from Psammomys obesus (Fat sand rat).